A 522-amino-acid chain; its full sequence is ATP synthase subunit alpha 2 (522 aa).

An ATP-binding site is contributed by 176 to 183 (GDRQTGKT).

It belongs to the ATPase alpha/beta chains family. F-type ATPases have 2 components, CF(1) - the catalytic core - and CF(0) - the membrane proton channel. CF(1) has five subunits: alpha(3), beta(3), gamma(1), delta(1), epsilon(1). CF(0) has three main subunits: a(1), b(2) and c(9-12). The alpha and beta chains form an alternating ring which encloses part of the gamma chain. CF(1) is attached to CF(0) by a central stalk formed by the gamma and epsilon chains, while a peripheral stalk is formed by the delta and b chains.

It localises to the cell inner membrane. The enzyme catalyses ATP + H2O + 4 H(+)(in) = ADP + phosphate + 5 H(+)(out). Functionally, produces ATP from ADP in the presence of a proton gradient across the membrane. The alpha chain is a regulatory subunit. This Syntrophotalea carbinolica (strain DSM 2380 / NBRC 103641 / GraBd1) (Pelobacter carbinolicus) protein is ATP synthase subunit alpha 2.